We begin with the raw amino-acid sequence, 434 residues long: Histidinol dehydrogenase (434 aa).

NAD(+) contacts are provided by Tyr130, Gln188, and Asn211. Substrate contacts are provided by Ser237, Gln259, and His262. 2 residues coordinate Zn(2+): Gln259 and His262. Catalysis depends on proton acceptor residues Glu326 and His327. Substrate contacts are provided by His327, Asp360, Glu414, and His419. A Zn(2+)-binding site is contributed by Asp360. His419 provides a ligand contact to Zn(2+).

It belongs to the histidinol dehydrogenase family. As to quaternary structure, homodimer. It depends on Zn(2+) as a cofactor.

The catalysed reaction is L-histidinol + 2 NAD(+) + H2O = L-histidine + 2 NADH + 3 H(+). It participates in amino-acid biosynthesis; L-histidine biosynthesis; L-histidine from 5-phospho-alpha-D-ribose 1-diphosphate: step 9/9. In terms of biological role, catalyzes the sequential NAD-dependent oxidations of L-histidinol to L-histidinaldehyde and then to L-histidine. The polypeptide is Histidinol dehydrogenase (Shigella flexneri).